Consider the following 1130-residue polypeptide: MKTSKASQRYRSIRRNASQCYLYQDSLLLGNSDDSFNADETGDSSDPEQIFQNIQFQKDLMANIRCRPWTMGQKLRALRRAKEIVLKFEGRLTRTRGYQAAGAELWRKFARLACNFVVIFIPWEMRIKKIESHFGSGVASYFIFLRWLFGINIVLTVMTGAFVVLPELIAGQPFGSTASKTIPREQITSAQDLDTVWSLGGYLQYSVLFYGYYGRERRIGRAGYRLPLAYFLVGMAVFAYSFIVLLKRMAKNSRTSLASASNENYTFCWRVFCAWDYLIGNPEAAESKTAAILNSIREAILEEQEKKKNKNMAVTVCLRIIANILVLLSLAGSIYLIYFVVDRSQKLEQSKKELTLWEKNEVSVVVSLVTMLAPSAFDLIAALEMYHPRTTLRFQLARVLVLYLGNLYSLIIALLDKVNSMNIEEAATKNITSHWADAPTFSATRTVPEEGQWPTPGSGAELRRNTSTWVVEETSFLTSITPHTKANKTVPYMQGPQGQCWETYVGQEMLKLSVIDMLFTVASILLIDFFRGLFVRYLSDYWCWDLESKFPEYGEFKIAENVLHLVYNQGMIWMGAFFSPCLPAFNVLKLIGLMYLRSWAVLTCNVPHQQVFRASRSNNFYLAMLLFMLFLCMLPTIFAIVHYKPSLNCGPFSGQEKIYDIVSETIENDFPTWFHAVVGHISSPVVILPAVLLLFMLIYYLQSIARSLKLSSQQLRMQIQNARSEDKKKVAQMVEALAIPSDARQAGSATEAESSENSKPKTLQARIQTHEESSKRLLKDSDLISQLSSVYMATSPNNGHMLNFDSLSSKSLRMEAITRSLPQSPGQGSRDPCSPLLDGSRSRPEQDTNRHPHRPCSSTSNLHKNRSCSSVTQTQPLKDVRSEPLSRKDFQPISPPFCGSGVSTLMTHDHSPRAPRYYVVNERDSHKKTHRAFWPERHFKIDALGDIVELYPRNVQQYMSWVPNQPCSPQLSEEEEEMLRRDLVQWSIPASSLTDLPRSSCFYTGDRSENNTRDPKYQRRVYYRSGDNSFEDQLERPTFVHRKPRSRNGQYPQHALKARVKAKFEPSFTESDSVSAASSSDHQNSNNDQYLHVMSSQGRFPRSASQLGRRKAKSRQVLPTDLNDLICSNV.

Residues 1–148 (MKTSKASQRY…ASYFIFLRWL (148 aa)) are Cytoplasmic-facing. Residues 149-169 (FGINIVLTVMTGAFVVLPELI) traverse the membrane as a helical segment. Residues 170-192 (AGQPFGSTASKTIPREQITSAQD) lie on the Extracellular side of the membrane. A helical membrane pass occupies residues 193–213 (LDTVWSLGGYLQYSVLFYGYY). The Cytoplasmic portion of the chain corresponds to 214–225 (GRERRIGRAGYR). Residues 226-246 (LPLAYFLVGMAVFAYSFIVLL) traverse the membrane as a helical segment. The Extracellular segment spans residues 247–319 (KRMAKNSRTS…KNMAVTVCLR (73 aa)). N264 carries N-linked (GlcNAc...) asparagine glycosylation. Residues 320–340 (IIANILVLLSLAGSIYLIYFV) form a helical membrane-spanning segment. Residues 341 to 361 (VDRSQKLEQSKKELTLWEKNE) lie on the Cytoplasmic side of the membrane. A helical membrane pass occupies residues 362-382 (VSVVVSLVTMLAPSAFDLIAA). Over 383–393 (LEMYHPRTTLR) the chain is Extracellular. The helical transmembrane segment at 394 to 414 (FQLARVLVLYLGNLYSLIIAL) threads the bilayer. At 415–509 (LDKVNSMNIE…CWETYVGQEM (95 aa)) the chain is on the cytoplasmic side. A helical membrane pass occupies residues 510–530 (LKLSVIDMLFTVASILLIDFF). The Extracellular segment spans residues 531–570 (RGLFVRYLSDYWCWDLESKFPEYGEFKIAENVLHLVYNQG). Residues 571–591 (MIWMGAFFSPCLPAFNVLKLI) traverse the membrane as a helical segment. Residues 592–619 (GLMYLRSWAVLTCNVPHQQVFRASRSNN) are Cytoplasmic-facing. The helical transmembrane segment at 620 to 640 (FYLAMLLFMLFLCMLPTIFAI) threads the bilayer. Residues 641–680 (VHYKPSLNCGPFSGQEKIYDIVSETIENDFPTWFHAVVGH) lie on the Extracellular side of the membrane. A helical membrane pass occupies residues 681–701 (ISSPVVILPAVLLLFMLIYYL). The Cytoplasmic portion of the chain corresponds to 702–1130 (QSIARSLKLS…DLNDLICSNV (429 aa)). Disordered stretches follow at residues 742–774 (DARQ…EESS), 819–893 (RSLP…FQPI), 999–1019 (SSCF…KYQR), 1033–1059 (QLER…LKAR), and 1097–1116 (QGRF…KSRQ). Over residues 747–767 (GSATEAESSENSKPKTLQARI) the composition is skewed to polar residues. The segment covering 840 to 850 (SRSRPEQDTNR) has biased composition (basic and acidic residues). A compositionally biased stretch (polar residues) spans 856-876 (CSSTSNLHKNRSCSSVTQTQP). Basic and acidic residues-rich tracts occupy residues 878-890 (KDVR…RKDF) and 1006-1017 (DRSENNTRDPKY). Over residues 1097–1106 (QGRFPRSASQ) the composition is skewed to polar residues.

It belongs to the TMC family. In terms of tissue distribution, detected in most neuronal organs and also in some non-neuronal tissues.

Its subcellular location is the membrane. Functionally, probable component of an ion channel. Molecular function hasn't been characterized yet. The chain is Transmembrane channel-like protein 3 from Mus musculus (Mouse).